A 172-amino-acid polypeptide reads, in one-letter code: Adenine phosphoribosyltransferase (172 aa).

This sequence belongs to the purine/pyrimidine phosphoribosyltransferase family. Homodimer.

Its subcellular location is the cytoplasm. The enzyme catalyses AMP + diphosphate = 5-phospho-alpha-D-ribose 1-diphosphate + adenine. It participates in purine metabolism; AMP biosynthesis via salvage pathway; AMP from adenine: step 1/1. In terms of biological role, catalyzes a salvage reaction resulting in the formation of AMP, that is energically less costly than de novo synthesis. This Levilactobacillus brevis (strain ATCC 367 / BCRC 12310 / CIP 105137 / JCM 1170 / LMG 11437 / NCIMB 947 / NCTC 947) (Lactobacillus brevis) protein is Adenine phosphoribosyltransferase.